Here is a 260-residue protein sequence, read N- to C-terminus: Carbonic anhydrase 3 (260 aa).

Ala2 is subject to N-acetylalanine. Positions 3–259 (KEWGYASHNG…IKGRVVRASF (257 aa)) constitute an Alpha-carbonic anhydrase domain. Ser29, Ser43, Ser48, Ser50, and Ser55 each carry phosphoserine. The involved in proton transfer stretch occupies residues 64–67 (KTCR). At Thr73 the chain carries Phosphothreonine. Zn(2+) contacts are provided by His94, His96, and His119. Tyr127 bears the Phosphotyrosine mark. Residue Thr129 is modified to Phosphothreonine. Cys182 and Cys187 each carry S-glutathionyl cysteine. Substrate is bound at residue 198–199 (TT). Thr216 carries the phosphothreonine modification. Residue Ser219 is modified to Phosphoserine.

The protein belongs to the alpha-carbonic anhydrase family. It depends on Zn(2+) as a cofactor. Post-translationally, S-thiolated both by thiol-disulfide exchange with glutathione disulfide and by oxyradical-initiated S-thiolation with reduced glutathione. S-glutathionylated in hepatocytes under oxidative stress. Expressed in liver and muscle.

It localises to the cytoplasm. It carries out the reaction hydrogencarbonate + H(+) = CO2 + H2O. With respect to regulation, inhibited by acetazolamide. In terms of biological role, reversible hydration of carbon dioxide. The polypeptide is Carbonic anhydrase 3 (Ca3) (Rattus norvegicus (Rat)).